Consider the following 902-residue polypeptide: Ephrin type-B receptor 1-B (902 aa).

In terms of domain architecture, Eph LBD spans 1–119; that stretch reads HRVYVEMRFT…FFKKCPSVVQ (119 aa). The Extracellular portion of the chain corresponds to 1–459; it reads HRVYVEMRFT…KSELREQLPL (459 aa). 2 consecutive Fibronectin type-III domains span residues 240 to 350 and 351 to 448; these read VPSG…TNQA and APSS…TEED. Residues Asn252, Asn344, and Asn398 are each glycosylated (N-linked (GlcNAc...) asparagine). A helical membrane pass occupies residues 460-480; the sequence is IAGSAAAGVVFIVSLVAISIV. Residues 481-902 are Cytoplasmic-facing; the sequence is CSRKRTYSKE…QISQSPTSIA (422 aa). A Protein kinase domain is found at 537-800; the sequence is VKIEEVIGAG…EIVNTLDKMI (264 aa). Residues 543-551 and Lys569 contribute to the ATP site; that span reads IGAGEFGEV. Asp662 serves as the catalytic Proton acceptor. An SAM domain is found at 829–893; the sequence is SAFTSVDDWL…LNSIQSMRVQ (65 aa). A PDZ-binding motif is present at residues 900-902; that stretch reads SIA.

It belongs to the protein kinase superfamily. Tyr protein kinase family. Ephrin receptor subfamily. In terms of assembly, heterotetramer upon binding of the ligand. The heterotetramer is composed of an ephrin dimer and a receptor dimer. Oligomerization is probably required to induce biological responses. In terms of processing, phosphorylated. Autophosphorylation is stimulated by ligands. In terms of tissue distribution, expressed in the embryo in the brain and spinal cord and in the first and fourth visceral arches. Most abundant in adult brain, with lower levels in eye, heart, ovary, oviduct, lung and pharynx.

Its subcellular location is the cell membrane. The protein resides in the early endosome membrane. It localises to the cell projection. It is found in the dendrite. The enzyme catalyses L-tyrosyl-[protein] + ATP = O-phospho-L-tyrosyl-[protein] + ADP + H(+). Functionally, receptor tyrosine kinase which binds promiscuously transmembrane ephrin-B family ligands residing on adjacent cells, leading to contact-dependent bidirectional signaling into neighboring cells. The signaling pathway downstream of the receptor is referred to as forward signaling while the signaling pathway downstream of the ephrin ligand is referred to as reverse signaling. May play a role in axon guidance during nervous system development. May also play an important redundant role with other ephrin-B receptors in development and maturation of dendritic spines and synapse formation. More generally, may play a role in targeted cell migration and adhesion. Upon activation by ephrin-B ligands activates the MAPK/ERK and the JNK signaling cascades to regulate cell migration and adhesion respectively. The protein is Ephrin type-B receptor 1-B (ephb1-b) of Xenopus laevis (African clawed frog).